A 184-amino-acid chain; its full sequence is ATP synthase subunit b 1 (184 aa).

Residues 4–24 (LSILAVLAASPAMAATGPFLS) form a helical membrane-spanning segment.

The protein belongs to the ATPase B chain family. F-type ATPases have 2 components, F(1) - the catalytic core - and F(0) - the membrane proton channel. F(1) has five subunits: alpha(3), beta(3), gamma(1), delta(1), epsilon(1). F(0) has three main subunits: a(1), b(2) and c(10-14). The alpha and beta chains form an alternating ring which encloses part of the gamma chain. F(1) is attached to F(0) by a central stalk formed by the gamma and epsilon chains, while a peripheral stalk is formed by the delta and b chains.

The protein localises to the cell inner membrane. Functionally, f(1)F(0) ATP synthase produces ATP from ADP in the presence of a proton or sodium gradient. F-type ATPases consist of two structural domains, F(1) containing the extramembraneous catalytic core and F(0) containing the membrane proton channel, linked together by a central stalk and a peripheral stalk. During catalysis, ATP synthesis in the catalytic domain of F(1) is coupled via a rotary mechanism of the central stalk subunits to proton translocation. Component of the F(0) channel, it forms part of the peripheral stalk, linking F(1) to F(0). The polypeptide is ATP synthase subunit b 1 (Cereibacter sphaeroides (strain ATCC 17023 / DSM 158 / JCM 6121 / CCUG 31486 / LMG 2827 / NBRC 12203 / NCIMB 8253 / ATH 2.4.1.) (Rhodobacter sphaeroides)).